The chain runs to 923 residues: Glucosidase 2 subunit alpha (923 aa).

A signal peptide spans Met-1 to Gly-25. Residue Asn-262 is glycosylated (N-linked (GlcNAc...) asparagine). The active-site Nucleophile is the Asp-524. The active site involves Glu-527. A glycan (N-linked (GlcNAc...) asparagine) is linked at Asn-563. Asp-600 acts as the Proton donor in catalysis. N-linked (GlcNAc...) asparagine glycosylation occurs at Asn-822.

This sequence belongs to the glycosyl hydrolase 31 family. Heterodimer of a catalytic subunit alpha (gls2) and a subunit beta (gtb1).

It localises to the endoplasmic reticulum. The enzyme catalyses N(4)-(alpha-D-Glc-(1-&gt;3)-alpha-D-Man-(1-&gt;2)-alpha-D-Man-(1-&gt;2)-alpha-D-Man-(1-&gt;3)-[alpha-D-Man-(1-&gt;2)-alpha-D-Man-(1-&gt;3)-[alpha-D-Man-(1-&gt;2)-alpha-D-Man-(1-&gt;6)]-alpha-D-Man-(1-&gt;6)]-beta-D-Man-(1-&gt;4)-beta-D-GlcNAc-(1-&gt;4)-beta-D-GlcNAc)-L-asparaginyl-[protein] + H2O = N(4)-(alpha-D-Man-(1-&gt;2)-alpha-D-Man-(1-&gt;2)-alpha-D-Man-(1-&gt;3)-[alpha-D-Man-(1-&gt;2)-alpha-D-Man-(1-&gt;3)-[alpha-D-Man-(1-&gt;2)-alpha-D-Man-(1-&gt;6)]-alpha-D-Man-(1-&gt;6)]-beta-D-Man-(1-&gt;4)-beta-D-GlcNAc-(1-&gt;4)-beta-D-GlcNAc)-L-asparaginyl-[protein] (N-glucan mannose isomer 9A1,2,3B1,2,3) + beta-D-glucose. It catalyses the reaction N(4)-(alpha-D-Glc-(1-&gt;3)-alpha-D-Glc-(1-&gt;3)-alpha-D-Man-(1-&gt;2)-alpha-D-Man-(1-&gt;2)-alpha-D-Man-(1-&gt;3)-[alpha-D-Man-(1-&gt;2)-alpha-D-Man-(1-&gt;3)-[alpha-D-Man-(1-&gt;2)-alpha-D-Man-(1-&gt;6)]-alpha-D-Man-(1-&gt;6)]-beta-D-Man-(1-&gt;4)-beta-D-GlcNAc-(1-&gt;4)-beta-D-GlcNAc)-L-asparaginyl-[protein] + H2O = N(4)-(alpha-D-Glc-(1-&gt;3)-alpha-D-Man-(1-&gt;2)-alpha-D-Man-(1-&gt;2)-alpha-D-Man-(1-&gt;3)-[alpha-D-Man-(1-&gt;2)-alpha-D-Man-(1-&gt;3)-[alpha-D-Man-(1-&gt;2)-alpha-D-Man-(1-&gt;6)]-alpha-D-Man-(1-&gt;6)]-beta-D-Man-(1-&gt;4)-beta-D-GlcNAc-(1-&gt;4)-beta-D-GlcNAc)-L-asparaginyl-[protein] + beta-D-glucose. The protein operates within glycan metabolism; N-glycan metabolism. Its function is as follows. Catalytic subunit of glucosidase 2, which cleaves sequentially the 2 innermost alpha-1,3-linked glucose residues from the Glc(2)Man(9)GlcNAc(2) oligosaccharide precursor of immature glycoproteins. The chain is Glucosidase 2 subunit alpha from Schizosaccharomyces pombe (strain 972 / ATCC 24843) (Fission yeast).